The following is a 399-amino-acid chain: 26S proteasome regulatory subunit 10B homolog A (399 aa).

Residue Thr-2 is modified to N-acetylthreonine. Residue 180–187 (GPPGTGKT) coordinates ATP. Lys-203 participates in a covalent cross-link: Glycyl lysine isopeptide (Lys-Gly) (interchain with G-Cter in ubiquitin).

The protein belongs to the AAA ATPase family. Component of the 19S regulatory particle (RP/PA700) base subcomplex of the 26S proteasome. The 26S proteasome is composed of a core protease (CP), known as the 20S proteasome, capped at one or both ends by the 19S regulatory particle (RP/PA700). The RP/PA700 complex is composed of at least 17 different subunits in two subcomplexes, the base and the lid, which form the portions proximal and distal to the 20S proteolytic core, respectively.

It localises to the cytoplasm. The protein resides in the nucleus. In terms of biological role, the 26S proteasome is involved in the ATP-dependent degradation of ubiquitinated proteins. The regulatory (or ATPase) complex confers ATP dependency and substrate specificity to the 26S complex. The polypeptide is 26S proteasome regulatory subunit 10B homolog A (RPT4A) (Arabidopsis thaliana (Mouse-ear cress)).